The primary structure comprises 480 residues: ATP synthase subunit beta (480 aa).

Position 153-160 (153-160) interacts with ATP; it reads GGAGVGKT.

Belongs to the ATPase alpha/beta chains family. F-type ATPases have 2 components, CF(1) - the catalytic core - and CF(0) - the membrane proton channel. CF(1) has five subunits: alpha(3), beta(3), gamma(1), delta(1), epsilon(1). CF(0) has three main subunits: a(1), b(2) and c(9-12). The alpha and beta chains form an alternating ring which encloses part of the gamma chain. CF(1) is attached to CF(0) by a central stalk formed by the gamma and epsilon chains, while a peripheral stalk is formed by the delta and b chains.

It is found in the cell membrane. It catalyses the reaction ATP + H2O + 4 H(+)(in) = ADP + phosphate + 5 H(+)(out). Functionally, produces ATP from ADP in the presence of a proton gradient across the membrane. The catalytic sites are hosted primarily by the beta subunits. This Lactobacillus gasseri (strain ATCC 33323 / DSM 20243 / BCRC 14619 / CIP 102991 / JCM 1131 / KCTC 3163 / NCIMB 11718 / NCTC 13722 / AM63) protein is ATP synthase subunit beta.